The sequence spans 198 residues: Ribonuclease HII (198 aa).

Positions 14 to 198 (GVIAGVDEVG…KNFAPISRAL (185 aa)) constitute an RNase H type-2 domain. The a divalent metal cation site is built by aspartate 20, glutamate 21, and aspartate 112.

It belongs to the RNase HII family. It depends on Mn(2+) as a cofactor. The cofactor is Mg(2+).

The protein resides in the cytoplasm. It catalyses the reaction Endonucleolytic cleavage to 5'-phosphomonoester.. Endonuclease that specifically degrades the RNA of RNA-DNA hybrids. This is Ribonuclease HII from Wolbachia pipientis wMel.